Consider the following 400-residue polypeptide: Laminin subunit B (400 aa).

Laminin EGF-like domains are found at residues 1–5 (EGCKP), 6–53 (CECD…GCKS), and 54–100 (CTCN…QCIP). Cystine bridges form between Cys-6–Cys-18, Cys-8–Cys-25, Cys-27–Cys-36, Cys-39–Cys-51, Cys-54–Cys-66, Cys-56–Cys-73, Cys-75–Cys-84, and Cys-87–Cys-98. The domain II and I stretch occupies residues 101 to 400 (CGECFDNWDK…AEAKNNAHEA (300 aa)). The stretch at 140-235 (KEFEELEQVL…RENALEIQEQ (96 aa)) forms a coiled coil. N-linked (GlcNAc...) asparagine glycosylation is found at Asn-160, Asn-175, Asn-216, Asn-266, Asn-283, Asn-310, and Asn-356. A coiled-coil region spans residues 353–400 (EAKNTSRKAEELIKSKYRSTSSTLSELENSNKQCKQATAEAKNNAHEA). The segment at 369-400 (YRSTSSTLSELENSNKQCKQATAEAKNNAHEA) is disordered. The segment covering 371–383 (STSSTLSELENSN) has biased composition (low complexity).

As to quaternary structure, laminin is a complex glycoprotein, consisting of three different polypeptide chains (alpha, beta, gamma), which are bound to each other by disulfide bonds into a cross-shaped molecule comprising one long and three short arms with globules at each end. In terms of tissue distribution, individual glial and muscle cells.

The protein resides in the secreted. It is found in the extracellular space. The protein localises to the extracellular matrix. Binding to cells via a high affinity receptor, laminin is thought to mediate the attachment, migration and organization of cells into tissues during embryonic development by interacting with other extracellular matrix components. In Hirudo medicinalis (Medicinal leech), this protein is Laminin subunit B.